The primary structure comprises 146 residues: MLRLIIAAAVLVSACLAYPQRREGAPADAANLQSFDPALMSMQGMQGGQMPGMAGGQFLPFNPNLQMGYKRDFDENLEKRKQHSQFNADENKAPFDSEENFMNFLHNEKGDKHPFANVDSADTDLGQFEPSAENKNGEFRFFDKEQ.

A signal peptide spans 1–19; that stretch reads MLRLIIAAAVLVSACLAYP. Positions 20–34 are excised as a propeptide; it reads QRREGAPADAANLQS. M40 is modified (methionine sulfoxide; partial; in Cn2). Propeptides lie at residues 58–80 and 104–146; these read FLPF…LEKR and FLHN…DKEQ. The tract at residues 107–146 is disordered; it reads NEKGDKHPFANVDSADTDLGQFEPSAENKNGEFRFFDKEQ. Residues 135 to 146 are compositionally biased toward basic and acidic residues; the sequence is KNGEFRFFDKEQ.

As to expression, expressed by the venom duct.

The protein resides in the secreted. This chain is Linear conopeptide, found in Conus consors (Singed cone).